A 259-amino-acid chain; its full sequence is Ubiquitin-conjugating enzyme E2 J2 (259 aa).

Topologically, residues 1–226 (MSNNSNKRAP…AGLPQANRHH (226 aa)) are cytoplasmic. The UBC core domain maps to 12-162 (TATQRLKQDY…DKVFCELFPE (151 aa)). Cys-94 functions as the Glycyl thioester intermediate in the catalytic mechanism. A helical; Anchor for type IV membrane protein membrane pass occupies residues 227–247 (GLLGGALANLFVIVGFAAFAY). Residues 248-259 (TVKYVLRSIAQE) lie on the Lumenal side of the membrane.

This sequence belongs to the ubiquitin-conjugating enzyme family. In terms of assembly, interacts with murid herpesvirus 4 protein K3 (mK3).

It localises to the endoplasmic reticulum membrane. The catalysed reaction is S-ubiquitinyl-[E1 ubiquitin-activating enzyme]-L-cysteine + [E2 ubiquitin-conjugating enzyme]-L-cysteine = [E1 ubiquitin-activating enzyme]-L-cysteine + S-ubiquitinyl-[E2 ubiquitin-conjugating enzyme]-L-cysteine.. It participates in protein modification; protein ubiquitination. Its function is as follows. Catalyzes the covalent attachment of ubiquitin to other proteins. Seems to function in the selective degradation of misfolded membrane proteins from the endoplasmic reticulum (ERAD). In cooperation with the GATOR2 complex, catalyzes 'Lys-6'-linked ubiquitination of NPRL2. In terms of biological role, in case of infection by the murid herpesvirus 4, its association with the viral E3 ligase K3 mediates ubiquitination of host surface class I (MHC-I) H-2D(b)/H2-D1 and H-2K(b)/H2-K1 molecules before they exit the endoplasmic reticulum, leading to their degradation by the ERAD system, thus blocking the immune detection of virus-infected cells. The complex formed with the murid herpesvirus 4 protein K3 mediates ubiquitination of lysine, as well as serine and threonine residues present in the cytoplasmic tail of surface class I molecules and promotes ubiquitination of hydroxylated serine or threonine residues via ester bonds instead of the classical isopeptide linkage. This chain is Ubiquitin-conjugating enzyme E2 J2 (Ube2j2), found in Mus musculus (Mouse).